The following is a 214-amino-acid chain: Response regulator GacA (214 aa).

One can recognise a Response regulatory domain in the interval 3-119 (KVLVVDDHDL…EMVQAIRLVF (117 aa)). At Asp54 the chain carries 4-aspartylphosphate. The 66-residue stretch at 143 to 208 (NNSPFDLLSE…ELALLAVRHG (66 aa)) folds into the HTH luxR-type domain. The segment at residues 167–186 (VQTISDKLCLSPKTVNTYRY) is a DNA-binding region (H-T-H motif).

Phosphorylated by LemA.

Functionally, forms part of a two-component regulatory system GacA/GacA(LemA). May be involved in lesion formation, swarming and in the production of extracellular protease, syringomycin and N-acyl-L-homoserine lactone (acyl-HSL). The polypeptide is Response regulator GacA (gacA) (Pseudomonas syringae pv. syringae (strain B728a)).